Reading from the N-terminus, the 252-residue chain is MLKYHFPNVCEDELINIYSYGDFKGQGKYICLFKIENQSFLFWRNDKGNKIYTNLESISVEIINTNNTYNQSQNVCPQDLVDTYNQSQNVCPQDLVDTYNQSQNVCPQDLVDTYNQSQNVCPQDLVDTYNQSQNVCPQDLVDTYNQSQNVCPQDLVDTYNQSQNVYTQDLIDTYNQSQNVCPQDLVDTYNQSQNVCPQDLVDTYNQSQNVCPQDLVDTYNQSQNVCPQDLNVYTQDLIDTYNQSQNCDCGCK.

10 repeat units span residues 68 to 82 (TYNQ…DLVD), 83 to 97 (TYNQ…DLVD), 98 to 112 (TYNQ…DLVD), 113 to 127 (TYNQ…DLVD), 128 to 142 (TYNQ…DLVD), 143 to 157 (TYNQ…DLVD), 158 to 172 (TYNQ…DLID), 173 to 187 (TYNQ…DLVD), 188 to 202 (TYNQ…DLVD), and 203 to 217 (TYNQ…DLVD). The tract at residues 68 to 246 (TYNQSQNVCP…LIDTYNQSQN (179 aa)) is 13 X 15 AA tandem repeats. One copy of the 11; truncated repeat lies at 218-230 (TYNQSQNVCPQDL). The stretch at 231 to 239 (NVYTQDLID) is one 12; truncated repeat. Residues 240 to 246 (TYNQSQN) form a 13; truncated repeat.

A protein probably derived from this gene is found in cuboidal crystalline inclusions, but is not toxic even when coexpressed with upstream ORF1. The protein runs anomalously as a 50 kDa band in gels. This is an uncharacterized protein from Bacillus thuringiensis subsp. kurstaki.